The primary structure comprises 346 residues: D-amino-acid oxidase (346 aa).

Residues Gly-22, Ile-24, Thr-52, Thr-53, Ser-54, Ala-58, Ala-59, Leu-60, and Thr-187 each contribute to the FAD site. D-proline contacts are provided by Tyr-227 and Arg-284. 2 residues coordinate D-serine: Tyr-227 and Arg-284. FAD is bound by residues Arg-284, Gly-311, Gly-312, Gly-314, and Thr-316. Arg-284 contacts D-dopa. A D-proline-binding site is contributed by Gly-312. Gly-312 is a binding site for D-serine. Gly-312 serves as a coordination point for D-dopa. The Microbody targeting signal signature appears at 344 to 346; that stretch reads SKL.

This sequence belongs to the DAMOX/DASOX family. Requires FAD as cofactor.

Its subcellular location is the peroxisome matrix. It catalyses the reaction a D-alpha-amino acid + O2 + H2O = a 2-oxocarboxylate + H2O2 + NH4(+). It carries out the reaction D-serine + O2 + H2O = 3-hydroxypyruvate + H2O2 + NH4(+). The enzyme catalyses D-phenylalanine + O2 + H2O = 3-phenylpyruvate + H2O2 + NH4(+). The catalysed reaction is D-alanine + O2 + H2O = pyruvate + H2O2 + NH4(+). It catalyses the reaction D-arginine + O2 + H2O = 5-guanidino-2-oxopentanoate + H2O2 + NH4(+). It carries out the reaction D-methionine + O2 + H2O = 4-methylsulfanyl-2-oxobutanoate + H2O2 + NH4(+). The enzyme catalyses D-ornithine + O2 + H2O = 5-amino-2-oxopentanoate + H2O2 + NH4(+). The catalysed reaction is D-leucine + O2 + H2O = 4-methyl-2-oxopentanoate + H2O2 + NH4(+). It catalyses the reaction D-lysine + O2 + H2O = 6-amino-2-oxohexanoate + H2O2 + NH4(+). It carries out the reaction D-proline + O2 = 1-pyrroline-2-carboxylate + H2O2. The enzyme catalyses D-valine + O2 + H2O = 3-methyl-2-oxobutanoate + H2O2 + NH4(+). The catalysed reaction is D-histidine + O2 + H2O = 3-(imidazol-5-yl)pyruvate + H2O2 + NH4(+). In terms of biological role, catalyzes the oxidative deamination of D-amino acids with broad substrate specificity. Has low in vitro and no in vivo activity on D-serine; primary D-serine degradation is performed by the D-serine dehydratase dsd. This is D-amino-acid oxidase (ddo-1) from Dictyostelium discoideum (Social amoeba).